A 138-amino-acid chain; its full sequence is Large ribosomal subunit protein eL14B (138 aa).

At Ser2 the chain carries N-acetylserine.

The protein belongs to the eukaryotic ribosomal protein eL14 family. Component of the large ribosomal subunit (LSU). Mature yeast ribosomes consist of a small (40S) and a large (60S) subunit. The 40S small subunit contains 1 molecule of ribosomal RNA (18S rRNA) and 33 different proteins (encoded by 57 genes). The large 60S subunit contains 3 rRNA molecules (25S, 5.8S and 5S rRNA) and 46 different proteins (encoded by 81 genes). Post-translationally, N-terminally acetylated by acetyltransferase NatA.

It is found in the cytoplasm. Component of the ribosome, a large ribonucleoprotein complex responsible for the synthesis of proteins in the cell. The small ribosomal subunit (SSU) binds messenger RNAs (mRNAs) and translates the encoded message by selecting cognate aminoacyl-transfer RNA (tRNA) molecules. The large subunit (LSU) contains the ribosomal catalytic site termed the peptidyl transferase center (PTC), which catalyzes the formation of peptide bonds, thereby polymerizing the amino acids delivered by tRNAs into a polypeptide chain. The nascent polypeptides leave the ribosome through a tunnel in the LSU and interact with protein factors that function in enzymatic processing, targeting, and the membrane insertion of nascent chains at the exit of the ribosomal tunnel. The polypeptide is Large ribosomal subunit protein eL14B (Saccharomyces cerevisiae (strain ATCC 204508 / S288c) (Baker's yeast)).